The primary structure comprises 210 residues: Outer-membrane lipoprotein carrier protein (210 aa).

Positions 1 to 26 (MHMIRRAAGALAVFAVAALAAAPAWA) are cleaved as a signal peptide.

It belongs to the LolA family. As to quaternary structure, monomer.

It is found in the periplasm. Participates in the translocation of lipoproteins from the inner membrane to the outer membrane. Only forms a complex with a lipoprotein if the residue after the N-terminal Cys is not an aspartate (The Asp acts as a targeting signal to indicate that the lipoprotein should stay in the inner membrane). This is Outer-membrane lipoprotein carrier protein from Bordetella bronchiseptica (strain ATCC BAA-588 / NCTC 13252 / RB50) (Alcaligenes bronchisepticus).